Reading from the N-terminus, the 516-residue chain is tRNA-guanine(15) transglycosylase (516 aa).

Catalysis depends on D93, which acts as the Nucleophile. Positions 128 and 196 each coordinate substrate. Zn(2+) contacts are provided by C279, C281, and C284. A compositionally biased stretch (low complexity) spans 488–502 (LSAVSERLGDEASVG). Residues 488 to 516 (LSAVSERLGDEASVGGDDGDDGGSASSAE) are disordered.

It belongs to the archaeosine tRNA-ribosyltransferase family. It depends on Zn(2+) as a cofactor.

The catalysed reaction is guanosine(15) in tRNA + 7-cyano-7-deazaguanine = 7-cyano-7-carbaguanosine(15) in tRNA + guanine. Its pathway is tRNA modification; archaeosine-tRNA biosynthesis. Functionally, exchanges the guanine residue with 7-cyano-7-deazaguanine (preQ0) at position 15 in the dihydrouridine loop (D-loop) of archaeal tRNAs. The chain is tRNA-guanine(15) transglycosylase from Haloferax volcanii (strain ATCC 29605 / DSM 3757 / JCM 8879 / NBRC 14742 / NCIMB 2012 / VKM B-1768 / DS2) (Halobacterium volcanii).